The following is a 602-amino-acid chain: Isocyanide synthase A (602 aa).

This sequence belongs to the isocyanide synthase family.

In terms of biological role, isocyanide synthase involved in the biosynthesis of isocyanides (or isonitriles), a class of microbial secondary metabolites. The presence of an isonitrile moiety within a compound imparts unique biological (cytotoxic, antibacterial, and antiprotozoal) and chemical (transition metal coordination) properties and enables synthetic and biochemical applications. The protein is Isocyanide synthase A of Aspergillus fumigatus (strain ATCC MYA-4609 / CBS 101355 / FGSC A1100 / Af293) (Neosartorya fumigata).